The sequence spans 202 residues: Tetranectin (202 aa).

The first 21 residues, 1 to 21 (MELWGAYLLLCLFSLLTQVTT), serve as a signal peptide directing secretion. The O-linked (GalNAc...) threonine glycan is linked to T25. Intrachain disulfides connect C71–C81, C98–C197, and C173–C189. Residues 77-198 (VHMKCFLAFT…CRDQLPYICQ (122 aa)) form the C-type lectin domain.

As to quaternary structure, homotrimer. In terms of tissue distribution, found in plasma.

It localises to the secreted. Its function is as follows. Tetranectin binds to plasminogen and to isolated kringle 4. May be involved in the packaging of molecules destined for exocytosis. Plays a role in retinal function. This Homo sapiens (Human) protein is Tetranectin (CLEC3B).